The following is a 290-amino-acid chain: MSLTTPDKAQVLADALPWLTALNGKIVVVKYGGNAMTDDRLKAAFAADMVFLRNCGIHPVVVHGGGPQISAMLKKLGIAGDFKGGFRVTTPEVLEVARMVLFGQVGRELVNLINAYGPYAVGITGEDAHLFTAVRRTVMVDGVATDIGLVGDVERVNTDAVLDLIDAGRIPVVSTIAPDTAGLVYNINADTAAAALAEALGAEKLLMLTDVEGLYTDWPDRGSLVNQINSDALAELLPTLEEGMVPKIEACLRAIDGGVPSAHVIDGRVEHCVLVELFTNEGAGTKVVRS.

Substrate contacts are provided by residues 65-66, Arg87, and Asn186; that span reads GG.

The protein belongs to the acetylglutamate kinase family. ArgB subfamily.

It localises to the cytoplasm. It catalyses the reaction N-acetyl-L-glutamate + ATP = N-acetyl-L-glutamyl 5-phosphate + ADP. Its pathway is amino-acid biosynthesis; L-arginine biosynthesis; N(2)-acetyl-L-ornithine from L-glutamate: step 2/4. Functionally, catalyzes the ATP-dependent phosphorylation of N-acetyl-L-glutamate. The sequence is that of Acetylglutamate kinase from Mycolicibacterium gilvum (strain PYR-GCK) (Mycobacterium gilvum (strain PYR-GCK)).